The sequence spans 388 residues: Succinate--CoA ligase [ADP-forming] subunit beta (388 aa).

One can recognise an ATP-grasp domain in the interval 9–245 (KELLKSYGLP…KSQENERELK (237 aa)). ATP-binding positions include Lys46, 53–55 (GRG), Glu100, Tyr103, and Glu108. Mg(2+)-binding residues include Asn200 and Asp214. Substrate is bound by residues Asn265 and 322-324 (GIV).

This sequence belongs to the succinate/malate CoA ligase beta subunit family. Heterotetramer of two alpha and two beta subunits. It depends on Mg(2+) as a cofactor.

The catalysed reaction is succinate + ATP + CoA = succinyl-CoA + ADP + phosphate. The enzyme catalyses GTP + succinate + CoA = succinyl-CoA + GDP + phosphate. The protein operates within carbohydrate metabolism; tricarboxylic acid cycle; succinate from succinyl-CoA (ligase route): step 1/1. Functionally, succinyl-CoA synthetase functions in the citric acid cycle (TCA), coupling the hydrolysis of succinyl-CoA to the synthesis of either ATP or GTP and thus represents the only step of substrate-level phosphorylation in the TCA. The beta subunit provides nucleotide specificity of the enzyme and binds the substrate succinate, while the binding sites for coenzyme A and phosphate are found in the alpha subunit. The polypeptide is Succinate--CoA ligase [ADP-forming] subunit beta (Psychrobacter arcticus (strain DSM 17307 / VKM B-2377 / 273-4)).